A 453-amino-acid chain; its full sequence is Homogentisate 1,2-dioxygenase (453 aa).

The active-site Proton acceptor is H306. H349 and E355 together coordinate Fe cation. 2 residues coordinate homogentisate: Y364 and H385. Residue H385 coordinates Fe cation.

The protein belongs to the homogentisate dioxygenase family. In terms of assembly, hexamer; dimer of trimers. Fe cation is required as a cofactor.

The enzyme catalyses homogentisate + O2 = 4-maleylacetoacetate + H(+). The protein operates within amino-acid degradation; L-phenylalanine degradation; acetoacetate and fumarate from L-phenylalanine: step 4/6. In terms of biological role, involved in the catabolism of homogentisate (2,5-dihydroxyphenylacetate or 2,5-OH-PhAc), a central intermediate in the degradation of phenylalanine and tyrosine. Catalyzes the oxidative ring cleavage of the aromatic ring of homogentisate to yield maleylacetoacetate. In Rhizobium rhizogenes (strain K84 / ATCC BAA-868) (Agrobacterium radiobacter), this protein is Homogentisate 1,2-dioxygenase.